Here is a 327-residue protein sequence, read N- to C-terminus: Aspartate carbamoyltransferase catalytic subunit (327 aa).

Residues arginine 67 and threonine 68 each coordinate carbamoyl phosphate. An L-aspartate-binding site is contributed by lysine 95. Residues arginine 117, histidine 145, and glutamine 148 each contribute to the carbamoyl phosphate site. L-aspartate-binding residues include arginine 178 and arginine 232. 2 residues coordinate carbamoyl phosphate: glycine 273 and proline 274.

Belongs to the aspartate/ornithine carbamoyltransferase superfamily. ATCase family. In terms of assembly, heterododecamer (2C3:3R2) of six catalytic PyrB chains organized as two trimers (C3), and six regulatory PyrI chains organized as three dimers (R2).

The catalysed reaction is carbamoyl phosphate + L-aspartate = N-carbamoyl-L-aspartate + phosphate + H(+). It functions in the pathway pyrimidine metabolism; UMP biosynthesis via de novo pathway; (S)-dihydroorotate from bicarbonate: step 2/3. In terms of biological role, catalyzes the condensation of carbamoyl phosphate and aspartate to form carbamoyl aspartate and inorganic phosphate, the committed step in the de novo pyrimidine nucleotide biosynthesis pathway. This is Aspartate carbamoyltransferase catalytic subunit from Parvibaculum lavamentivorans (strain DS-1 / DSM 13023 / NCIMB 13966).